A 190-amino-acid polypeptide reads, in one-letter code: Large ribosomal subunit protein uL10 (190 aa).

This sequence belongs to the universal ribosomal protein uL10 family. As to quaternary structure, part of the ribosomal stalk of the 50S ribosomal subunit. The N-terminus interacts with L11 and the large rRNA to form the base of the stalk. The C-terminus forms an elongated spine to which L12 dimers bind in a sequential fashion forming a multimeric L10(L12)X complex.

Functionally, forms part of the ribosomal stalk, playing a central role in the interaction of the ribosome with GTP-bound translation factors. The sequence is that of Large ribosomal subunit protein uL10 from Trichodesmium erythraeum (strain IMS101).